The sequence spans 447 residues: ATP-dependent protease ATPase subunit HslU (447 aa).

ATP contacts are provided by residues isoleucine 17, 59-64, aspartate 256, glutamate 321, and arginine 393; that span reads GVGKTE.

It belongs to the ClpX chaperone family. HslU subfamily. In terms of assembly, a double ring-shaped homohexamer of HslV is capped on each side by a ring-shaped HslU homohexamer. The assembly of the HslU/HslV complex is dependent on binding of ATP.

The protein localises to the cytoplasm. In terms of biological role, ATPase subunit of a proteasome-like degradation complex; this subunit has chaperone activity. The binding of ATP and its subsequent hydrolysis by HslU are essential for unfolding of protein substrates subsequently hydrolyzed by HslV. HslU recognizes the N-terminal part of its protein substrates and unfolds these before they are guided to HslV for hydrolysis. In Pseudomonas putida (strain ATCC 47054 / DSM 6125 / CFBP 8728 / NCIMB 11950 / KT2440), this protein is ATP-dependent protease ATPase subunit HslU.